The following is a 423-amino-acid chain: Aspartate aminotransferase, mitochondrial (423 aa).

Residues 1–22 (MALLQSRLLLSAPRRAAATARA) constitute a mitochondrion transit peptide. The substrate site is built by Gly-58, Trp-155, and Asn-208. Residue Lys-272 is modified to N6-(pyridoxal phosphate)lysine. Arg-400 contributes to the substrate binding site.

It belongs to the class-I pyridoxal-phosphate-dependent aminotransferase family. Homodimer. It depends on pyridoxal 5'-phosphate as a cofactor. In terms of tissue distribution, detected in heart (at protein level).

Its subcellular location is the mitochondrion matrix. The catalysed reaction is L-aspartate + 2-oxoglutarate = oxaloacetate + L-glutamate. It catalyses the reaction L-kynurenine + 2-oxoglutarate = kynurenate + L-glutamate + H2O. Catalyzes the irreversible transamination of the L-tryptophan metabolite L-kynurenine to form kynurenic acid (KA). As a member of the malate-aspartate shuttle, it has a key role in the intracellular NAD(H) redox balance. Is important for metabolite exchange between mitochondria and cytosol, and for amino acid metabolism. The sequence is that of Aspartate aminotransferase, mitochondrial (GOT2) from Gallus gallus (Chicken).